A 670-amino-acid polypeptide reads, in one-letter code: Beta-fructofuranosidase 1 (670 aa).

The tract at residues 1 to 40 (MIPAVADPTTLDGGGARRPLLPETDPRGRAAAGAEQKRPP) is disordered. Residues 1 to 44 (MIPAVADPTTLDGGGARRPLLPETDPRGRAAAGAEQKRPPATPT) lie on the Cytoplasmic side of the membrane. The propeptide at 1 to 112 (MIPAVADPTT…APLLGSGALQ (112 aa)) is removed in mature form. A helical; Signal-anchor for type II membrane protein membrane pass occupies residues 45 to 65 (VLTAVVSAVLLLVLVAVTVLA). Over 66 to 670 (SQHVDGQAGG…RPYPATTTSL (605 aa)) the chain is Lumenal. Substrate contacts are provided by residues 136–139 (WMND), glutamine 155, and tryptophan 163. Residue aspartate 139 is part of the active site. Residue asparagine 165 is glycosylated (N-linked (GlcNAc...) asparagine). Substrate contacts are provided by residues 198-199 (WS) and 263-264 (RD). N-linked (GlcNAc...) asparagine glycosylation occurs at asparagine 275. Glutamate 322 and aspartate 362 together coordinate substrate. N-linked (GlcNAc...) asparagine glycosylation is present at asparagine 518. A disulfide bridge links cysteine 519 with cysteine 567. 2 N-linked (GlcNAc...) asparagine glycosylation sites follow: asparagine 595 and asparagine 639.

It belongs to the glycosyl hydrolase 32 family. May be present in two forms, a 70 kDa monomer and a heterodimer of the 30 kDa and 38 kDa subunits. The ratio of the levels of the two forms within cells appears to be regulated developmentally.

The protein resides in the membrane. The protein localises to the vacuole lumen. The catalysed reaction is Hydrolysis of terminal non-reducing beta-D-fructofuranoside residues in beta-D-fructofuranosides.. It participates in glycan biosynthesis; sucrose metabolism. This chain is Beta-fructofuranosidase 1 (IVR1), found in Zea mays (Maize).